Consider the following 351-residue polypeptide: Terpene cyclase sdgD (351 aa).

Helical transmembrane passes span isoleucine 7–isoleucine 27, threonine 62–isoleucine 82, leucine 89–leucine 109, tryptophan 126–isoleucine 146, isoleucine 160–leucine 180, valine 193–serine 213, isoleucine 229–leucine 249, phenylalanine 281–tyrosine 301, and leucine 316–tryptophan 336.

It belongs to the membrane-bound ascI terpene cyclase family.

It is found in the membrane. It functions in the pathway secondary metabolite biosynthesis. Its function is as follows. Epoxide hydrolase; part of the gene cluster that mediates the biosynthesis of the polyenes aspernidgulenes. The carbon backbone of aspernidgulenes is synthesized by the HR-PKS sdgA, which accepts acetyl-CoA as the starter unit and performs malonyl-CoA extensions as well as regioselective methylation and reduction. The resulting nonaketide offloads the HR-PKS by intramolecular lactonization to yield the 5,6-dihydro-alpha-pyrone-containing hexaenoic acids preaspernidgulene A1 and A2. The FAD-dependent monooxygenase sdgC then installs the first epoxide on the penultimate double bond. Subsequently, the FAD-dependent monooxygenase sdgF presumably generates a ketone intermediate through Meinwald rearrangement involving a hydride shift. Next, sdgC introduces another epoxide on the last olefin of the ketone intermediate after E/Z isomerization. The epoxide hydrolase sdgD then catalyzes stereospecific cyclization of the 5,6-dihydro-alpha-pyrone and opening of the epoxide ring to form an oxygenated trimethylcyclopentanone and an oxabicyclo[2.2.1]heptane unit. Finally, the bicyclic unit undergoes hydrolytic cleavage, either spontaneously or catalyzed by sdgD, to assemble the dimethyl-gamma-lactone moiety in aspernidgulene A1. This is Terpene cyclase sdgD from Emericella nidulans (strain FGSC A4 / ATCC 38163 / CBS 112.46 / NRRL 194 / M139) (Aspergillus nidulans).